Reading from the N-terminus, the 408-residue chain is Ribonuclease T2-like (408 aa).

The signal sequence occupies residues 1–25 (MLQSIPGPQHILKALTGSLGLSTIF). Disulfide bonds link cysteine 38/cysteine 56, cysteine 45/cysteine 92, cysteine 55/cysteine 158, and cysteine 100/cysteine 150. Histidine 85 is an active-site residue. Asparagine 108 is a glycosylation site (N-linked (GlcNAc...) asparagine). Residues glutamate 143 and histidine 147 contribute to the active site. Asparagine 173 carries an N-linked (GlcNAc...) asparagine glycan. The cysteines at positions 222 and 257 are disulfide-linked. A disordered region spans residues 268 to 292 (KHREPSRTTDTPSQPTTTGTPFKGR). Residues 275-288 (TTDTPSQPTTTGTP) are compositionally biased toward low complexity. Asparagine 372 carries an N-linked (GlcNAc...) asparagine glycan.

The protein belongs to the RNase T2 family.

It is found in the vacuole lumen. It localises to the cytoplasm. The enzyme catalyses a ribonucleotidyl-ribonucleotide-RNA + H2O = a 3'-end 3'-phospho-ribonucleotide-RNA + a 5'-end dephospho-ribonucleoside-RNA + H(+). In terms of biological role, rnase which modulates cell survival under stress conditions. Released from the vacuole to the cytoplasm during stress to promote tRNA and rRNA cleavage and to activate separately a downstream pathway that promotes cell death. Involved in cell size, vacuolar morphology and growth at high temperatures and high salt concentration. The sequence is that of Ribonuclease T2-like (rny1) from Aspergillus fumigatus (strain ATCC MYA-4609 / CBS 101355 / FGSC A1100 / Af293) (Neosartorya fumigata).